The primary structure comprises 61 residues: Tryptophyllin-T1 (61 aa).

The signal sequence occupies residues 1-22 (MDFLKKSLFLVLFLGLVSISLC). The propeptide occupies 23-53 (DEEKRQDDDEASEREEKKEIHEEGNQEERRD). A disordered region spans residues 25 to 61 (EKRQDDDEASEREEKKEIHEEGNQEERRDRPPSWIPK). A compositionally biased stretch (basic and acidic residues) spans 36-55 (REEKKEIHEEGNQEERRDRP). Position 56 is a 4-hydroxyproline; partial (P56).

The protein belongs to the frog skin active peptide (FSAP) family. Tryptophillin subfamily. As to expression, expressed by the skin glands.

It is found in the secreted. The protein is Tryptophyllin-T1 of Pithecopus azureus (Orange-legged monkey tree frog).